A 257-amino-acid polypeptide reads, in one-letter code: UPF0246 protein Rsph17029_0026 (257 aa).

This sequence belongs to the UPF0246 family.

The chain is UPF0246 protein Rsph17029_0026 from Cereibacter sphaeroides (strain ATCC 17029 / ATH 2.4.9) (Rhodobacter sphaeroides).